Reading from the N-terminus, the 564-residue chain is Arginine--tRNA ligase (564 aa).

A 'HIGH' region motif is present at residues 136 to 146 (ANPTGPLHMGN).

Belongs to the class-I aminoacyl-tRNA synthetase family. In terms of assembly, monomer.

It is found in the cytoplasm. It carries out the reaction tRNA(Arg) + L-arginine + ATP = L-arginyl-tRNA(Arg) + AMP + diphosphate. This chain is Arginine--tRNA ligase, found in Acetivibrio thermocellus (strain ATCC 27405 / DSM 1237 / JCM 9322 / NBRC 103400 / NCIMB 10682 / NRRL B-4536 / VPI 7372) (Clostridium thermocellum).